The chain runs to 421 residues: Ribosomal RNA large subunit methyltransferase G (421 aa).

Positions E389–A421 are disordered.

It belongs to the methyltransferase superfamily. RlmG family.

Its subcellular location is the cytoplasm. It carries out the reaction guanosine(1835) in 23S rRNA + S-adenosyl-L-methionine = N(2)-methylguanosine(1835) in 23S rRNA + S-adenosyl-L-homocysteine + H(+). In terms of biological role, specifically methylates the guanine in position 1835 (m2G1835) of 23S rRNA. The polypeptide is Ribosomal RNA large subunit methyltransferase G (Shewanella halifaxensis (strain HAW-EB4)).